The chain runs to 224 residues: Uracil-DNA glycosylase (224 aa).

Residue Asp-62 is the Proton acceptor of the active site.

Belongs to the uracil-DNA glycosylase (UDG) superfamily. UNG family.

It localises to the cytoplasm. It catalyses the reaction Hydrolyzes single-stranded DNA or mismatched double-stranded DNA and polynucleotides, releasing free uracil.. Its function is as follows. Excises uracil residues from the DNA which can arise as a result of misincorporation of dUMP residues by DNA polymerase or due to deamination of cytosine. This Aliivibrio fischeri (strain ATCC 700601 / ES114) (Vibrio fischeri) protein is Uracil-DNA glycosylase.